A 200-amino-acid polypeptide reads, in one-letter code: Small ribosomal subunit protein uS4 (200 aa).

The disordered stretch occupies residues 22–42; sequence TGKELQKRPYPPGQHGPGQRR. The S4 RNA-binding domain maps to 92 to 152; that stretch reads SRLDNLVYRL…EKSRNLQVIK (61 aa).

The protein belongs to the universal ribosomal protein uS4 family. In terms of assembly, part of the 30S ribosomal subunit. Contacts protein S5. The interaction surface between S4 and S5 is involved in control of translational fidelity.

In terms of biological role, one of the primary rRNA binding proteins, it binds directly to 16S rRNA where it nucleates assembly of the body of the 30S subunit. Its function is as follows. With S5 and S12 plays an important role in translational accuracy. This chain is Small ribosomal subunit protein uS4 (rpsD), found in Geobacillus stearothermophilus (Bacillus stearothermophilus).